Consider the following 510-residue polypeptide: Laccase (510 aa).

4 Plastocyanin-like domains span residues 45 to 79 (PTKL…LPLK), 99 to 174 (KTVV…LISD), 242 to 317 (YLEV…IVLK), and 372 to 506 (LTLT…MRPM). 4 residues coordinate Cu cation: His-103, His-105, His-151, and His-153. His-419, His-422, His-424, His-491, Cys-492, His-493, His-497, and Met-502 together coordinate Cu cation.

This sequence belongs to the multicopper oxidase family. Requires Cu(2+) as cofactor.

The enzyme catalyses 4 hydroquinone + O2 = 4 benzosemiquinone + 2 H2O. With respect to regulation, resistant to alkali and organic solvents such as methanol, ethanol and acetone. Resistant to EDTA, which might be explained by the spatial protection of copper ions in the active sites. Inhibited by DMSO. Strongly inhibited by Fe(2+) and DTT. Functionally, multicopper oxidase that catalyzes the oxidation of a variety of substrates, including phenolic and non-phenolic compounds. Substrates include 2,6-dimethoxyphenol (2,6-DMP) and the non-phenolic compound 2,2'-azino-bis(3-ethylbenzothiazoline-6-sulfonic acid) (ABTS). Cannot use guaiacol and catechol. In Bacillus stratosphericus, this protein is Laccase.